The chain runs to 375 residues: Growth/differentiation factor 8 (375 aa).

Positions 1–18 (MQKLQISVYIYLFMLIVA) are cleaved as a signal peptide. Residues 19-266 (GPVDLNEKSE…VTDTPKRSRR (248 aa)) constitute a propeptide that is removed on maturation. N-linked (GlcNAc...) asparagine glycosylation is found at Asn-47 and Asn-71. 4 disulfide bridges follow: Cys-272-Cys-282, Cys-281-Cys-340, Cys-309-Cys-372, and Cys-313-Cys-374.

This sequence belongs to the TGF-beta family. Homodimer; disulfide-linked. Interacts with WFIKKN2, leading to inhibit its activity. Interacts with FSTL3. In terms of processing, synthesized as large precursor molecule that undergoes proteolytic cleavage to generate an N-terminal propeptide and a disulfide linked C-terminal dimer, which is the biologically active molecule. The circulating form consists of a latent complex of the C-terminal dimer and other proteins, including its propeptide, which maintain the C-terminal dimer in a latent, inactive state. Ligand activation requires additional cleavage of the prodomain by a tolloid-like metalloproteinase.

The protein resides in the secreted. In terms of biological role, acts specifically as a negative regulator of skeletal muscle growth. The protein is Growth/differentiation factor 8 (MSTN) of Taurotragus derbianus (Giant eland).